We begin with the raw amino-acid sequence, 473 residues long: Beta-secretase 1 (473 aa).

The N-terminal stretch at 1–21 (MAPALPWLLLWVGSGVLPVHG) is a signal peptide. The propeptide occupies 22–45 (TQDGIRLPLRSGLAGAPLGLRLPR). The Extracellular portion of the chain corresponds to 22-429 (TQDGIRLPLR…PQTDESTLMT (408 aa)). The 317-residue stretch at 72-388 (YYVEMTVGSP…DRARKRIGFA (317 aa)) folds into the Peptidase A1 domain. The active site involves Asp90. Lys123 bears the N6-acetyllysine mark. N-linked (GlcNAc...) asparagine glycans are attached at residues Asn150, Asn169, and Asn195. Disulfide bonds link Cys188-Cys392, Cys250-Cys415, and Cys302-Cys352. Lys247, Lys251, and Lys257 each carry N6-acetyllysine. The active site involves Asp261. N6-acetyllysine is present on residues Lys271, Lys272, and Lys279. N-linked (GlcNAc...) asparagine glycosylation occurs at Asn326. The helical transmembrane segment at 430 to 450 (IAYVMAAICALFMLPLCLMVC) threads the bilayer. 4 S-palmitoyl cysteine lipidation sites follow: Cys446, Cys450, Cys454, and Cys457. Residues 451-473 (QWRCLRCLRHQHDDFADDISLLK) lie on the Cytoplasmic side of the membrane. An interaction with RTN3 region spans residues 451-473 (QWRCLRCLRHQHDDFADDISLLK). The short motif at 468-472 (DISLL) is the DXXLL element. Ser470 carries the phosphoserine modification. Residue Lys473 forms a Glycyl lysine isopeptide (Lys-Gly) (interchain with G-Cter in ubiquitin) linkage.

The protein belongs to the peptidase A1 family. As to quaternary structure, monomer. Interacts (via DXXLL motif) with GGA1, GGA2 and GGA3 (via their VHS domain); the interaction highly increases when BACE1 is phosphorylated at Ser-470. Interacts with RTN1; RTN2; RTN3 and RTN4; the interaction leads to inhibition of amyloid precursor protein processing. Interacts with SNX6. Interacts with PCSK9. Interacts with NAT8 and NAT8B. Interacts with BIN1. Interacts (via extracellular domain) with ADAM10 (via extracellular domain). Interacts with SORL1; this interaction may affect binding with APP and hence reduce APP cleavage. Interacts with NRDC AND NRG1. Post-translationally, palmitoylation mediates lipid raft localization. Acetylated in the endoplasmic reticulum at Lys-123, Lys-247, Lys-251, Lys-257, Lys-271, Lys-272, and Lys-279. Acetylation by NAT8 and NAT8B is transient and deacetylation probably occurs in the Golgi. Acetylation regulates the maturation, the transport to the plasma membrane, the stability and the expression of the protein. In terms of processing, ubiquitinated at Lys-473, ubiquitination leads to lysosomal degradation. Monoubiquitinated and 'Lys-63'-linked polyubitinated. Deubiquitnated by USP8; inhibits lysosomal degradation. Post-translationally, phosphorylation at Ser-470 is required for interaction with GGA1 and retrograded transport from endosomal compartments to the trans-Golgi network. Non-phosphorylated BACE1 enters a direct recycling route to the cell surface. N-Glycosylated. Addition of a bisecting N-acetylglucosamine by MGAT3 blocks lysosomal targeting, further degradation and is required for maintaining stability under stress conditions.

Its subcellular location is the cell membrane. The protein resides in the golgi apparatus. It is found in the trans-Golgi network. It localises to the endoplasmic reticulum. The protein localises to the endosome. Its subcellular location is the cell surface. The protein resides in the cytoplasmic vesicle membrane. It is found in the membrane raft. It localises to the lysosome. The protein localises to the late endosome. Its subcellular location is the early endosome. The protein resides in the recycling endosome. It is found in the cell projection. It localises to the axon. The protein localises to the dendrite. It catalyses the reaction Broad endopeptidase specificity. Cleaves Glu-Val-Asn-Leu-|-Asp-Ala-Glu-Phe in the Swedish variant of Alzheimer's amyloid precursor protein.. Inhibited by RTN3 and RTN4. Its function is as follows. Responsible for the proteolytic processing of the amyloid precursor protein (APP). Cleaves at the N-terminus of the A-beta peptide sequence, between residues 671 and 672 of APP, leads to the generation and extracellular release of beta-cleaved soluble APP, and a corresponding cell-associated C-terminal fragment which is later released by gamma-secretase. Cleaves CHL1. This is Beta-secretase 1 (BACE1) from Cavia porcellus (Guinea pig).